A 259-amino-acid chain; its full sequence is Protein-L-isoaspartate O-methyltransferase 1 (259 aa).

Serine 109 is a catalytic residue.

It belongs to the methyltransferase superfamily. L-isoaspartyl/D-aspartyl protein methyltransferase family.

The protein resides in the cytoplasm. The catalysed reaction is [protein]-L-isoaspartate + S-adenosyl-L-methionine = [protein]-L-isoaspartate alpha-methyl ester + S-adenosyl-L-homocysteine. In terms of biological role, catalyzes the methyl esterification of L-isoaspartyl residues in peptides and proteins that result from spontaneous decomposition of normal L-aspartyl and L-asparaginyl residues. It plays a role in the repair and/or degradation of damaged proteins. The chain is Protein-L-isoaspartate O-methyltransferase 1 from Cupriavidus necator (strain ATCC 17699 / DSM 428 / KCTC 22496 / NCIMB 10442 / H16 / Stanier 337) (Ralstonia eutropha).